A 282-amino-acid polypeptide reads, in one-letter code: Formamidopyrimidine-DNA glycosylase (282 aa).

Catalysis depends on P2, which acts as the Schiff-base intermediate with DNA. E3 (proton donor) is an active-site residue. K58 functions as the Proton donor; for beta-elimination activity in the catalytic mechanism. DNA-binding residues include H96, R115, and K152. The segment at 238–272 (HVYGRGGQPCERCGEEILKTVLGGRGTHYCPSCQN) adopts an FPG-type zinc-finger fold. Residue R262 is the Proton donor; for delta-elimination activity of the active site.

It belongs to the FPG family. Monomer. Zn(2+) is required as a cofactor.

It catalyses the reaction Hydrolysis of DNA containing ring-opened 7-methylguanine residues, releasing 2,6-diamino-4-hydroxy-5-(N-methyl)formamidopyrimidine.. The enzyme catalyses 2'-deoxyribonucleotide-(2'-deoxyribose 5'-phosphate)-2'-deoxyribonucleotide-DNA = a 3'-end 2'-deoxyribonucleotide-(2,3-dehydro-2,3-deoxyribose 5'-phosphate)-DNA + a 5'-end 5'-phospho-2'-deoxyribonucleoside-DNA + H(+). In terms of biological role, involved in base excision repair of DNA damaged by oxidation or by mutagenic agents. Acts as a DNA glycosylase that recognizes and removes damaged bases. Has a preference for oxidized purines, such as 7,8-dihydro-8-oxoguanine (8-oxoG). Has AP (apurinic/apyrimidinic) lyase activity and introduces nicks in the DNA strand. Cleaves the DNA backbone by beta-delta elimination to generate a single-strand break at the site of the removed base with both 3'- and 5'-phosphates. This Corynebacterium aurimucosum (strain ATCC 700975 / DSM 44827 / CIP 107346 / CN-1) (Corynebacterium nigricans) protein is Formamidopyrimidine-DNA glycosylase.